A 172-amino-acid polypeptide reads, in one-letter code: Peptide methionine sulfoxide reductase MsrA (172 aa).

The active site involves C14.

Belongs to the MsrA Met sulfoxide reductase family.

The catalysed reaction is L-methionyl-[protein] + [thioredoxin]-disulfide + H2O = L-methionyl-(S)-S-oxide-[protein] + [thioredoxin]-dithiol. It catalyses the reaction [thioredoxin]-disulfide + L-methionine + H2O = L-methionine (S)-S-oxide + [thioredoxin]-dithiol. In terms of biological role, has an important function as a repair enzyme for proteins that have been inactivated by oxidation. Catalyzes the reversible oxidation-reduction of methionine sulfoxide in proteins to methionine. The polypeptide is Peptide methionine sulfoxide reductase MsrA (Streptomyces coelicolor (strain ATCC BAA-471 / A3(2) / M145)).